Consider the following 465-residue polypeptide: Sodium-dependent phosphate transport protein 1 (465 aa).

Asn-39, Asn-47, and Asn-56 each carry an N-linked (GlcNAc...) asparagine glycan. 10 helical membrane passes run Gly-79–Leu-99, Ser-117–Cys-137, Phe-176–Trp-196, Val-199–Phe-219, Leu-260–Val-280, Leu-304–Leu-324, Leu-337–Leu-356, Thr-363–Ile-383, Val-399–Leu-419, and Lys-429–Ala-449.

Belongs to the major facilitator superfamily. Sodium/anion cotransporter family. Interacts with PDZK1. Kidney.

It localises to the apical cell membrane. The enzyme catalyses 3 Na(+)(out) + phosphate(out) = 3 Na(+)(in) + phosphate(in). The catalysed reaction is urate(out) = urate(in). Important for the resorption of phosphate by the kidney. May be involved in actively transporting phosphate into cells via Na(+) cotransport in the renal brush border membrane. Plays a role in urate transport in the kidney. This is Sodium-dependent phosphate transport protein 1 (Slc17a1) from Mus musculus (Mouse).